Reading from the N-terminus, the 364-residue chain is Transcription factor IIIA (364 aa).

C2H2-type zinc fingers lie at residues 38-62, 68-92, 98-123, 130-154, 160-184, 187-211, 215-237, 244-269, and 275-299; these read FICS…LCKH, FVCD…VLIH, FVCA…ERKH, YVCS…QCQH, FRCT…GKVH, YLCQ…REAH, ITCN…MKTH, YRCP…LSFH, and FVCE…SVVH. Residues 299 to 364 form a disordered region; the sequence is HDPDKKRMKL…PPPAALLTVC (66 aa). Residues 338–352 show a composition bias toward low complexity; it reads SLPNASAESSSSPEA.

It localises to the nucleus. In terms of biological role, involved in ribosomal large subunit biogenesis. Binds the approximately 50 base pairs internal control region (ICR) of 5S ribosomal RNA genes. It is required for their RNA polymerase III-dependent transcription and may also maintain the transcription of other genes. Also binds the transcribed 5S RNA's. The protein is Transcription factor IIIA (Gtf3a) of Mus musculus (Mouse).